The following is an 899-amino-acid chain: Gamma-aminobutyric acid type B receptor subunit 1 (899 aa).

An N-terminal signal peptide occupies residues 1–19 (MFVRSSWLLLWGTIVWASA). The Extracellular portion of the chain corresponds to 20–447 (EPVTLHIGGT…KKHAMTVSNE (428 aa)). N-linked (GlcNAc...) asparagine glycans are attached at residues Asn-69, Asn-266, Asn-339, Asn-353, and Asn-371. The helical transmembrane segment at 448–468 (FYYPTILFAVLGIAACVFIYL) threads the bilayer. Over 469–487 (FTQKHHERLIIFQSQPECN) the chain is Cytoplasmic. The helical transmembrane segment at 488-508 (NILLIGCSLCLFSLFLIGLPS) threads the bilayer. Topologically, residues 509–525 (DDISISESLFPLLCHAR) are extracellular. The helical transmembrane segment at 526–546 (VTILLFGFTFAYGSMFAKVWI) threads the bilayer. Residues 547 to 616 (VHRMGATENQ…LNQPISSSKF (70 aa)) are Cytoplasmic-facing. A helical membrane pass occupies residues 617-637 (YVIVAALTAVDVFVCFVWVLI). At 638–674 (DPLHLTEQKFPLFTPADSEEDEMIMPVLQQCQSNQQE) the chain is on the extracellular side. The chain crosses the membrane as a helical span at residues 675–695 (VWIGIIMGFKCLLLVFGTFLS). The Cytoplasmic portion of the chain corresponds to 696 to 713 (YETRNLKLRFINDSRFVG). Residues 714-734 (LAIYNVAVMTLVTAPVVTLLI) traverse the membrane as a helical segment. Residues 735–741 (HGKVDAN) lie on the Extracellular side of the membrane. Residues 742–762 (FAFISLTVLICTYISVGLIYG) form a helical membrane-spanning segment. Over 763 to 899 (PKIRHIIKVP…SSTSSDEILL (137 aa)) the chain is Cytoplasmic. Residues 791–842 (KVDQKRYDMLKKENETLQIQIEEKERKIHECKERLEELTKNSETEDMNAQLL) are a coiled coil. The segment at 870-899 (DLQNGNHPGQIYENDNDDDGSSTSSDEILL) is disordered. Low complexity predominate over residues 890 to 899 (SSTSSDEILL).

It belongs to the G-protein coupled receptor 3 family. May form a heterodimer with gbb-2. Expressed in the nervous system, including cholinergic motor neurons, but not in GABAergic motor neurons or muscle.

Its subcellular location is the cell membrane. Functionally, component of a heterodimeric G-protein coupled receptor for GABA, formed by gbb-1 and gbb-2. Within the heterodimeric GABA receptor, only gbb-1 seems to bind agonists, while gbb-2 mediates coupling to G proteins. Ligand binding causes a conformation change that triggers signaling via guanine nucleotide-binding proteins (G proteins) and modulates the activity of down-stream effectors, such as adenylate cyclase. Signaling inhibits adenylate cyclase, stimulates phospholipase A2, activates potassium channels, inactivates voltage-dependent calcium-channels and modulates inositol phospholipid hydrolysis. Calcium is required for high affinity binding to GABA. Plays a critical role in the fine-tuning of inhibitory synaptic transmission. Pre-synaptic GABA receptor inhibits neurotransmitter release by down-regulating high-voltage activated calcium channels, whereas postsynaptic GABA receptor decreases neuronal excitability by activating a prominent inwardly rectifying potassium (Kir) conductance that underlies the late inhibitory postsynaptic potentials. Along with gbb-2, may couple to the G(o)-alpha G-protein goa-1 to negatively regulate cholinergic receptor activity in the presence of high levels of acetylcholine in ventral cord motor neurons. As acetylcholine depolarizes body wall muscles, modulation of acetylcholine levels most likely results in the control of locomotory behavior. Acts in neurons to regulate lifespan, and this may be through G-protein-egl-8/PLC-beta signaling to the transcription factor daf-16/FOXO. The chain is Gamma-aminobutyric acid type B receptor subunit 1 from Caenorhabditis elegans.